Here is a 247-residue protein sequence, read N- to C-terminus: uncharacterized protein (247 aa).

Residues 70–205 (ISLWMGPGNN…QKVPLEIMIR (136 aa)) form the N-acetyltransferase domain.

It belongs to the acetyltransferase family.

Its subcellular location is the endoplasmic reticulum. It localises to the golgi apparatus. It is found in the vacuole. This is an uncharacterized protein from Schizosaccharomyces pombe (strain 972 / ATCC 24843) (Fission yeast).